Here is a 396-residue protein sequence, read N- to C-terminus: Stearoyl-[acyl-carrier-protein] 9-desaturase 2, chloroplastic (396 aa).

The N-terminal 32 residues, methionine 1–arginine 32, are a transit peptide targeting the chloroplast. Glutamate 138, glutamate 176, histidine 179, glutamate 229, glutamate 262, and histidine 265 together coordinate Fe cation.

It belongs to the fatty acid desaturase type 2 family. In terms of assembly, homodimer. Fe(2+) is required as a cofactor.

Its subcellular location is the plastid. It localises to the chloroplast. It carries out the reaction octadecanoyl-[ACP] + 2 reduced [2Fe-2S]-[ferredoxin] + O2 + 2 H(+) = (9Z)-octadecenoyl-[ACP] + 2 oxidized [2Fe-2S]-[ferredoxin] + 2 H2O. It participates in lipid metabolism; fatty acid metabolism. Functionally, converts stearoyl-ACP to oleoyl-ACP by introduction of a cis double bond between carbons 9 and 10 of the acyl chain. Required for the repression of the salicylic acid (SA) signaling pathway. In Oryza sativa subsp. indica (Rice), this protein is Stearoyl-[acyl-carrier-protein] 9-desaturase 2, chloroplastic (SSI2).